An 839-amino-acid polypeptide reads, in one-letter code: Sodium/hydrogen exchanger 3 (839 aa).

A signal peptide spans 1-32; sequence MPLGVRGTRREFRFPVWGLLLLALWMLPRALG. Topologically, residues 33-56 are extracellular; sequence VEEIPGPDSHEKQGFQIVTFKWHH. The helical transmembrane segment at 57 to 79 threads the bilayer; that stretch reads VQDPYIIALWILVASLAKIVFHL. Residues 80–87 are Cytoplasmic-facing; the sequence is SHKVTSVV. The helical transmembrane segment at 88–107 threads the bilayer; the sequence is PESALLIVLGLILGGIVWAA. At 108–116 the chain is on the extracellular side; it reads DHIASFTLT. Residues 117–134 traverse the membrane as a helical segment; it reads PTVFFFYLLPPIVLDAGY. Residues 135–137 lie on the Cytoplasmic side of the membrane; the sequence is FMP. The helical transmembrane segment at 138–173 threads the bilayer; it reads NRLFFGNLGTILLYAVIGTVWNAATTGLSLYGVYLS. The a 1,2-diacyl-sn-glycero-3-phospho-(1D-myo-inositol) site is built by Gly143, Gly146, and Thr147. Residues 174–186 are Extracellular-facing; sequence GIMGDLSIGLLDF. The helical transmembrane segment at 187 to 208 threads the bilayer; the sequence is LLFGSLIAAVDPVAVLAVFEEV. The Cytoplasmic portion of the chain corresponds to 209–210; that stretch reads HV. The chain crosses the membrane as a helical span at residues 211–242; that stretch reads NDVLFIIVFGESLLNDAVTVVLYNVFDSFVSL. The Extracellular portion of the chain corresponds to 243-249; it reads GADKVTG. A helical membrane pass occupies residues 250–284; it reads VDCVKGIVSFFVVSLGGTLIGIIFAFLLSLVTRFT. The Cytoplasmic segment spans residues 285–286; it reads KH. A helical membrane pass occupies residues 287-309; it reads VRIIEPGFVFIISYLSYLTSEML. Residues 310 to 311 are Extracellular-facing; that stretch reads SL. Residues 312–328 form a helical membrane-spanning segment; the sequence is SAILAITFCGICCQKYV. The Cytoplasmic segment spans residues 329 to 335; the sequence is KANISEQ. The helical transmembrane segment at 336–364 threads the bilayer; sequence SATTVRYTMKMLASGAETIIFMFLGISAV. The Extracellular portion of the chain corresponds to 365-372; the sequence is DPAIWTWN. Residues 373–394 traverse the membrane as a helical segment; the sequence is TAFILLTLVFISVYRAIGVVLQ. Residues 395 to 407 lie on the Cytoplasmic side of the membrane; that stretch reads TWLLNKYRMVQLE. Residue Met403 coordinates a 1,2-diacyl-sn-glycero-3-phospho-(1D-myo-inositol). Residues 408 to 431 traverse the membrane as a helical segment; sequence IIDQVVMSYGGLRGAVAYALVVLL. Topologically, residues 432 to 438 are extracellular; the sequence is DEKKVKE. A helical transmembrane segment spans residues 439–472; it reads KNLFVSTTIIVVFFTVIFQGLTIKPLVQWLKVKK. The Cytoplasmic portion of the chain corresponds to 473-839; the sequence is SEHREPKLNE…RSFLPESTHM (367 aa). Residues Gln502, Ile503, and His505 each contribute to the a 1,2-diacyl-sn-glycero-3-phospho-(1D-myo-inositol) site. Residues Ser560 and Ser568 each carry the phosphoserine modification. The interval 581–595 is interaction with EZR; sequence RPSTVEASVSYLLRE. The segment at 596–673 is interaction with NHERF4; that stretch reads NVSTVCLDMQ…RKRLESFKST (78 aa). The tract at residues 597–701 is interaction with AHCYL1; that stretch reads VSTVCLDMQA…GQKRRNSSIP (105 aa). Phosphoserine is present on residues Ser598 and Ser613. The residue at position 669 (Ser669) is a Phosphoserine; by SGK1. Positions 688–697 are enriched in basic residues; sequence KRERGQKRRN. The tract at residues 688-710 is disordered; it reads KRERGQKRRNSSIPNGKIPMESP. Ser724, Ser815, and Ser818 each carry phosphoserine.

This sequence belongs to the monovalent cation:proton antiporter 1 (CPA1) transporter (TC 2.A.36) family. In terms of assembly, homodimer. Found in the forms of complex and dynamic macromolecular complexes. Binds NHERF1 and NHERF2. Interacts with CHP1, CHP2 and SHANK2. Interacts with NHERF4 and interactions decrease in response to elevated calcium ion levels. Interacts with PDZK1 (via C-terminal PDZ domain). Interacts with AHCYL1; the interaction is required for SLC9A3 activity. Interacts with EZR; interaction targets SLC9A3 to the apical membrane. Interacts with SNX27 (via PDZ domains); directs SLC9A3 membrane insertion from early endosomes to the plasma membrane. Phosphorylated by PKA, which inhibits activity. Phosphorylation at Ser-669 by SGK1 is associated with increased abundance at the cell membrane.

The protein localises to the apical cell membrane. It localises to the cell membrane. Its subcellular location is the recycling endosome membrane. The protein resides in the early endosome membrane. The catalysed reaction is Na(+)(in) + H(+)(out) = Na(+)(out) + H(+)(in). With respect to regulation, seems to switch between active and inactive modes in response to various stimuli. Activated directly or indirectly by membrane phosphatidylinositol (PIs). Regulated by a variety of auxiliary proteins, which facilitate the maturation, cell surface expression and function of the transporter. Inhibited specifically by the drug tenapanor. Functionally, plasma membrane Na(+)/H(+) antiporter. Exchanges intracellular H(+) ions for extracellular Na(+) in 1:1 stoichiometry, playing a key role in salt and fluid absorption and pH homeostasis. Major apical Na(+)/H(+) exchanger in kidney and intestine playing an important role in renal and intestine Na(+) absorption and blood pressure regulation. This chain is Sodium/hydrogen exchanger 3 (SLC9A3), found in Didelphis virginiana (North American opossum).